Consider the following 315-residue polypeptide: Ribosomal protein L11 methyltransferase (315 aa).

The S-adenosyl-L-methionine site is built by T163, G185, D207, and N249.

The protein belongs to the methyltransferase superfamily. PrmA family.

It is found in the cytoplasm. It carries out the reaction L-lysyl-[protein] + 3 S-adenosyl-L-methionine = N(6),N(6),N(6)-trimethyl-L-lysyl-[protein] + 3 S-adenosyl-L-homocysteine + 3 H(+). Functionally, methylates ribosomal protein L11. The polypeptide is Ribosomal protein L11 methyltransferase (Lactobacillus helveticus (strain DPC 4571)).